The chain runs to 268 residues: Indole-3-glycerol phosphate synthase 2 (268 aa).

This sequence belongs to the TrpC family.

It catalyses the reaction 1-(2-carboxyphenylamino)-1-deoxy-D-ribulose 5-phosphate + H(+) = (1S,2R)-1-C-(indol-3-yl)glycerol 3-phosphate + CO2 + H2O. The protein operates within amino-acid biosynthesis; L-tryptophan biosynthesis; L-tryptophan from chorismate: step 4/5. The sequence is that of Indole-3-glycerol phosphate synthase 2 (trpC2) from Ralstonia nicotianae (strain ATCC BAA-1114 / GMI1000) (Ralstonia solanacearum).